A 262-amino-acid polypeptide reads, in one-letter code: tRNA 4-demethylwyosine(37)-methyltransferase Taw21 (262 aa).

Residues H108, F125, 148–149 (DL), and 175–176 (DA) contribute to the S-adenosyl-L-methionine site.

It belongs to the class I-like SAM-binding methyltransferase superfamily. TRM5/TYW2 family.

It localises to the cytoplasm. It carries out the reaction 4-demethylwyosine(37) in tRNA(Phe) + S-adenosyl-L-methionine = isowyosine(37) in tRNA(Phe) + S-adenosyl-L-homocysteine + H(+). Its function is as follows. Catalyzes the C7-methylation of 4-demethylwyosine (imG-14) at position 37 in tRNA(Phe). The sequence is that of tRNA 4-demethylwyosine(37)-methyltransferase Taw21 from Saccharolobus solfataricus (strain ATCC 35092 / DSM 1617 / JCM 11322 / P2) (Sulfolobus solfataricus).